Reading from the N-terminus, the 211-residue chain is Protein-methionine-sulfoxide reductase heme-binding subunit MsrQ (211 aa).

5 helical membrane-spanning segments follow: residues 45–65 (HFTG…TPLA), 82–102 (LWCF…ELGV), 116–136 (PYLT…FTST), 153–173 (FVYL…KIIS), and 178–198 (IYAG…LSLF).

This sequence belongs to the MsrQ family. Heterodimer of a catalytic subunit (MsrP) and a heme-binding subunit (MsrQ). FMN is required as a cofactor. It depends on heme b as a cofactor.

It localises to the cell inner membrane. In terms of biological role, part of the MsrPQ system that repairs oxidized periplasmic proteins containing methionine sulfoxide residues (Met-O), using respiratory chain electrons. Thus protects these proteins from oxidative-stress damage caused by reactive species of oxygen and chlorine generated by the host defense mechanisms. MsrPQ is essential for the maintenance of envelope integrity under bleach stress, rescuing a wide series of structurally unrelated periplasmic proteins from methionine oxidation, including the primary periplasmic chaperone SurA and the lipoprotein Pal. MsrQ provides electrons for reduction to the reductase catalytic subunit MsrP, using the quinone pool of the respiratory chain. The polypeptide is Protein-methionine-sulfoxide reductase heme-binding subunit MsrQ (Escherichia coli O127:H6 (strain E2348/69 / EPEC)).